The primary structure comprises 349 residues: uncharacterized protein (349 aa).

The chain crosses the membrane as a helical span at residues 17 to 37 (VIAIVSTGLVFAMTLVLTGLV). The disordered stretch occupies residues 111-131 (FGAPEHGPGMPRVSDGRAPST). Helical transmembrane passes span 230 to 250 (AITVVAVLLWIVAALIVGSVV), 284 to 304 (VVALLAAVVGGILSLLLAPLF), and 308 to 328 (VVVPLSAFVALPAIATVIGLL).

The protein belongs to the ABC-4 integral membrane protein family.

The protein resides in the cell membrane. This is an uncharacterized protein from Mycobacterium bovis (strain ATCC BAA-935 / AF2122/97).